The chain runs to 207 residues: 2,3-bisphosphoglycerate-dependent phosphoglycerate mutase (207 aa).

Substrate is bound by residues 10–17 (RHGQSEWN), 23–24 (TG), Arg62, 89–92 (ERDY), Lys100, 116–117 (RR), and 160–161 (GN). The active-site Tele-phosphohistidine intermediate is His11. Glu89 (proton donor/acceptor) is an active-site residue.

It belongs to the phosphoglycerate mutase family. BPG-dependent PGAM subfamily. In terms of assembly, homodimer.

It carries out the reaction (2R)-2-phosphoglycerate = (2R)-3-phosphoglycerate. The protein operates within carbohydrate degradation; glycolysis; pyruvate from D-glyceraldehyde 3-phosphate: step 3/5. In terms of biological role, catalyzes the interconversion of 2-phosphoglycerate and 3-phosphoglycerate. The polypeptide is 2,3-bisphosphoglycerate-dependent phosphoglycerate mutase (Afipia carboxidovorans (strain ATCC 49405 / DSM 1227 / KCTC 32145 / OM5) (Oligotropha carboxidovorans)).